The sequence spans 426 residues: Chaperone SurA (426 aa).

An N-terminal signal peptide occupies residues 1–13 (MLGALFLGTAANA). PpiC domains are found at residues 164-265 (SEEL…KLLE) and 274-373 (RDEV…EVLG).

It is found in the periplasm. It catalyses the reaction [protein]-peptidylproline (omega=180) = [protein]-peptidylproline (omega=0). Functionally, chaperone involved in the correct folding and assembly of outer membrane proteins. Recognizes specific patterns of aromatic residues and the orientation of their side chains, which are found more frequently in integral outer membrane proteins. May act in both early periplasmic and late outer membrane-associated steps of protein maturation. In Pseudomonas fluorescens (strain Pf0-1), this protein is Chaperone SurA.